The following is a 314-amino-acid chain: Putative lipoprotein LppW (314 aa).

An N-terminal signal peptide occupies residues 1 to 22; it reads MRARPLTLLTALAAVTLVVVAG. Cys-23 is lipidated: N-palmitoyl cysteine. Cys-23 carries the S-diacylglycerol cysteine lipid modification.

The protein localises to the cell membrane. The polypeptide is Putative lipoprotein LppW (lppW) (Mycobacterium bovis (strain ATCC BAA-935 / AF2122/97)).